A 328-amino-acid chain; its full sequence is Endo-beta-1,4-glucanase B (328 aa).

Positions 1–17 are cleaved as a signal peptide; it reads MKVNTLLVAVAAGTAMA. N95 is a glycosylation site (N-linked (GlcNAc...) asparagine). Residue E155 is the Proton donor of the active site. The active-site Nucleophile is the E262.

It belongs to the glycosyl hydrolase 5 (cellulase A) family.

It is found in the secreted. It carries out the reaction Endohydrolysis of (1-&gt;4)-beta-D-glucosidic linkages in cellulose, lichenin and cereal beta-D-glucans.. Has endoglucanase activity on substrates containing beta-1,4 glycosidic bonds, like in carboxymethylcellulose (CMC), hydroxyethylcellulose (HEC) and beta-glucan. Involved in the degradation of complex natural cellulosic substrates. The sequence is that of Endo-beta-1,4-glucanase B (eglB) from Emericella nidulans (strain FGSC A4 / ATCC 38163 / CBS 112.46 / NRRL 194 / M139) (Aspergillus nidulans).